The following is a 102-amino-acid chain: Small ribosomal subunit protein uS10 (102 aa).

The protein belongs to the universal ribosomal protein uS10 family. In terms of assembly, part of the 30S ribosomal subunit.

Its function is as follows. Involved in the binding of tRNA to the ribosomes. The polypeptide is Small ribosomal subunit protein uS10 (Shouchella clausii (strain KSM-K16) (Alkalihalobacillus clausii)).